The sequence spans 364 residues: UDP-N-acetylglucosamine--N-acetylmuramyl-(pentapeptide) pyrophosphoryl-undecaprenol N-acetylglucosamine transferase (364 aa).

Residues 10–12 (TGG), Asn-126, Arg-167, Ser-199, Ile-253, and Gln-298 each bind UDP-N-acetyl-alpha-D-glucosamine.

It belongs to the glycosyltransferase 28 family. MurG subfamily.

The protein localises to the cell inner membrane. The enzyme catalyses di-trans,octa-cis-undecaprenyl diphospho-N-acetyl-alpha-D-muramoyl-L-alanyl-D-glutamyl-meso-2,6-diaminopimeloyl-D-alanyl-D-alanine + UDP-N-acetyl-alpha-D-glucosamine = di-trans,octa-cis-undecaprenyl diphospho-[N-acetyl-alpha-D-glucosaminyl-(1-&gt;4)]-N-acetyl-alpha-D-muramoyl-L-alanyl-D-glutamyl-meso-2,6-diaminopimeloyl-D-alanyl-D-alanine + UDP + H(+). It functions in the pathway cell wall biogenesis; peptidoglycan biosynthesis. Functionally, cell wall formation. Catalyzes the transfer of a GlcNAc subunit on undecaprenyl-pyrophosphoryl-MurNAc-pentapeptide (lipid intermediate I) to form undecaprenyl-pyrophosphoryl-MurNAc-(pentapeptide)GlcNAc (lipid intermediate II). The sequence is that of UDP-N-acetylglucosamine--N-acetylmuramyl-(pentapeptide) pyrophosphoryl-undecaprenol N-acetylglucosamine transferase from Amoebophilus asiaticus (strain 5a2).